We begin with the raw amino-acid sequence, 227 residues long: Cytochrome c oxidase subunit 2 (227 aa).

Residues 1–14 are Mitochondrial intermembrane-facing; the sequence is MAYPLQLGFQDATS. The chain crosses the membrane as a helical span at residues 15-45; the sequence is PIMEELLHFHDHTLMIVFLISSLVLYIISLM. Topologically, residues 46–59 are mitochondrial matrix; sequence LTTKLTHTSTMDAQ. A helical membrane pass occupies residues 60 to 87; sequence EVETIWTILPAIILILIALPSLRILYMM. At 88–227 the chain is on the mitochondrial intermembrane side; the sequence is DEINNPSLTI…HFEKWSTSML (140 aa). Residues His-161, Cys-196, Glu-198, Cys-200, His-204, and Met-207 each coordinate Cu cation. Glu-198 contributes to the Mg(2+) binding site.

The protein belongs to the cytochrome c oxidase subunit 2 family. Component of the cytochrome c oxidase (complex IV, CIV), a multisubunit enzyme composed of 14 subunits. The complex is composed of a catalytic core of 3 subunits MT-CO1, MT-CO2 and MT-CO3, encoded in the mitochondrial DNA, and 11 supernumerary subunits COX4I, COX5A, COX5B, COX6A, COX6B, COX6C, COX7A, COX7B, COX7C, COX8 and NDUFA4, which are encoded in the nuclear genome. The complex exists as a monomer or a dimer and forms supercomplexes (SCs) in the inner mitochondrial membrane with NADH-ubiquinone oxidoreductase (complex I, CI) and ubiquinol-cytochrome c oxidoreductase (cytochrome b-c1 complex, complex III, CIII), resulting in different assemblies (supercomplex SCI(1)III(2)IV(1) and megacomplex MCI(2)III(2)IV(2)). Found in a complex with TMEM177, COA6, COX18, COX20, SCO1 and SCO2. Interacts with TMEM177 in a COX20-dependent manner. Interacts with COX20. Interacts with COX16. Requires Cu cation as cofactor.

The protein resides in the mitochondrion inner membrane. The catalysed reaction is 4 Fe(II)-[cytochrome c] + O2 + 8 H(+)(in) = 4 Fe(III)-[cytochrome c] + 2 H2O + 4 H(+)(out). Functionally, component of the cytochrome c oxidase, the last enzyme in the mitochondrial electron transport chain which drives oxidative phosphorylation. The respiratory chain contains 3 multisubunit complexes succinate dehydrogenase (complex II, CII), ubiquinol-cytochrome c oxidoreductase (cytochrome b-c1 complex, complex III, CIII) and cytochrome c oxidase (complex IV, CIV), that cooperate to transfer electrons derived from NADH and succinate to molecular oxygen, creating an electrochemical gradient over the inner membrane that drives transmembrane transport and the ATP synthase. Cytochrome c oxidase is the component of the respiratory chain that catalyzes the reduction of oxygen to water. Electrons originating from reduced cytochrome c in the intermembrane space (IMS) are transferred via the dinuclear copper A center (CU(A)) of subunit 2 and heme A of subunit 1 to the active site in subunit 1, a binuclear center (BNC) formed by heme A3 and copper B (CU(B)). The BNC reduces molecular oxygen to 2 water molecules using 4 electrons from cytochrome c in the IMS and 4 protons from the mitochondrial matrix. The protein is Cytochrome c oxidase subunit 2 (MT-CO2) of Rhinoceros unicornis (Greater Indian rhinoceros).